The following is a 615-amino-acid chain: Sorting nexin-41 (615 aa).

The interval 1-71 (MWNDEDNNPY…DEGDYVGQAN (71 aa)) is disordered. Residues 42–53 (SHSSNPDISDFS) are compositionally biased toward low complexity. The region spanning 93–210 (PDMPILITDA…RFLDPNVSWS (118 aa)) is the PX domain. 4 residues coordinate a 1,2-diacyl-sn-glycero-3-phospho-(1D-myo-inositol-3-phosphate): Arg127, Ser129, Lys153, and Arg176. 2 disordered regions span residues 218–277 (ASSV…RFPP) and 432–504 (QYLN…RKTS). Composition is skewed to polar residues over residues 252-263 (LKSTSGTSSSPN) and 434-446 (LNRTSPQAPTKQR). The span at 447–456 (SLSTSSATSS) shows a compositional bias: low complexity.

This sequence belongs to the sorting nexin family.

It localises to the endosome membrane. The protein localises to the endomembrane system. In terms of biological role, may be required for cytoplasm to vacuole transport (Cvt) and pexophagy. This is Sorting nexin-41 (snx41) from Emericella nidulans (strain FGSC A4 / ATCC 38163 / CBS 112.46 / NRRL 194 / M139) (Aspergillus nidulans).